We begin with the raw amino-acid sequence, 272 residues long: 1,4-dihydroxy-2-naphthoyl-CoA synthase (272 aa).

Residues R33, 72-76, Y84, 116-120, T142, S148, Y245, and K260 each bind substrate; these read SGGDQ and YAIGG. 141 to 143 serves as a coordination point for hydrogencarbonate; that stretch reads QTG.

Belongs to the enoyl-CoA hydratase/isomerase family. MenB subfamily. Hydrogencarbonate serves as cofactor.

The catalysed reaction is 2-succinylbenzoyl-CoA + H(+) = 1,4-dihydroxy-2-naphthoyl-CoA + H2O. It functions in the pathway quinol/quinone metabolism; 1,4-dihydroxy-2-naphthoate biosynthesis; 1,4-dihydroxy-2-naphthoate from chorismate: step 6/7. Its pathway is quinol/quinone metabolism; menaquinone biosynthesis. In terms of biological role, converts o-succinylbenzoyl-CoA (OSB-CoA) to 1,4-dihydroxy-2-naphthoyl-CoA (DHNA-CoA). This chain is 1,4-dihydroxy-2-naphthoyl-CoA synthase, found in Staphylococcus epidermidis (strain ATCC 12228 / FDA PCI 1200).